Consider the following 126-residue polypeptide: Large ribosomal subunit protein bL20 (126 aa).

Belongs to the bacterial ribosomal protein bL20 family.

Its function is as follows. Binds directly to 23S ribosomal RNA and is necessary for the in vitro assembly process of the 50S ribosomal subunit. It is not involved in the protein synthesizing functions of that subunit. The sequence is that of Large ribosomal subunit protein bL20 from Nocardia farcinica (strain IFM 10152).